The chain runs to 151 residues: Putative pre-16S rRNA nuclease (151 aa).

This sequence belongs to the YqgF nuclease family.

It is found in the cytoplasm. Could be a nuclease involved in processing of the 5'-end of pre-16S rRNA. This Nostoc sp. (strain PCC 7120 / SAG 25.82 / UTEX 2576) protein is Putative pre-16S rRNA nuclease.